The sequence spans 317 residues: SWI/SNF-related matrix-associated actin-dependent regulator of chromatin subfamily E member 1-related (317 aa).

Over residues 1–22 (MSHGPKQPGAASAPASGKAPGQ) the composition is skewed to low complexity. A disordered region spans residues 1–71 (MSHGPKQPGA…RKKILPNGPK (71 aa)). A Glycyl lysine isopeptide (Lys-Gly) (interchain with G-Cter in SUMO2) cross-link involves residue Lys31. The segment covering 31–52 (KQERGEGPRAGEKGSHEEEPVK) has biased composition (basic and acidic residues). Residues 53–65 (KRGWPKGKKRKKI) are compositionally biased toward basic residues. The segment at residues 70–138 (PKAPVTGYVR…QYMKELRAYQ (69 aa)) is a DNA-binding region (HMG box). Ser160 bears the Phosphoserine mark. A coiled-coil region spans residues 190-257 (EEFLDQNKAR…LQQQLQAVRQ (68 aa)).

As to quaternary structure, component of a BHC histone deacetylase complex that contains HDAC1, HDAC2, HMG20B/BRAF35, KDM1A, RCOR1/CoREST and PHF21A/BHC80. The BHC complex may also contain ZMYM2, ZNF217, ZMYM3, GSE1 and GTF2I. Interacts with the BRCA2 tumor suppressor protein.

The protein resides in the nucleus. It localises to the chromosome. Its function is as follows. Required for correct progression through G2 phase of the cell cycle and entry into mitosis. Required for RCOR1/CoREST mediated repression of neuronal specific gene promoters. The chain is SWI/SNF-related matrix-associated actin-dependent regulator of chromatin subfamily E member 1-related (HMG20B) from Bos taurus (Bovine).